We begin with the raw amino-acid sequence, 585 residues long: Probable long-chain-fatty-acid--AMP ligase FadD30 (585 aa).

It belongs to the ATP-dependent AMP-binding enzyme family.

The protein operates within lipid metabolism; fatty acid biosynthesis. Functionally, catalyzes the activation of long-chain fatty acids as acyl-adenylates (acyl-AMP), which are then transferred to a multifunctional polyketide synthase (PKS) for further chain extension. This chain is Probable long-chain-fatty-acid--AMP ligase FadD30 (fadD30), found in Mycobacterium tuberculosis (strain CDC 1551 / Oshkosh).